The primary structure comprises 821 residues: Ent-pimara-8(14),15-diene synthase (821 aa).

The Mg(2+) site is built by Asp556, Asp560, Asn701, Thr705, and Glu709. The short motif at 556–560 is the DDXXD motif element; the sequence is DDFFD.

This sequence belongs to the terpene synthase family. Mg(2+) serves as cofactor. As to expression, highly expressed in roots, at intermediate levels in stems and at lower levels in leaves.

It catalyses the reaction ent-copalyl diphosphate = ent-pimara-8(14),15-diene + diphosphate. It functions in the pathway secondary metabolite biosynthesis; terpenoid biosynthesis. Its function is as follows. Involved in the biosynthesis of ent-kaurene diterpenoids natural products. Catalyzes the conversion of ent-copalyl diphosphate to ent-pimara-8(14),15-diene. The sequence is that of Ent-pimara-8(14),15-diene synthase from Oryza sativa subsp. japonica (Rice).